Here is a 314-residue protein sequence, read N- to C-terminus: Bifunctional pinoresinol-lariciresinol reductase 3 (314 aa).

NADP(+)-binding positions include 11 to 17 (GGTGFIG), Arg36, and Lys45. The Proton acceptor role is filled by Lys138. Arg142 serves as a coordination point for NADP(+). His272 serves as a coordination point for substrate.

This sequence belongs to the NmrA-type oxidoreductase family. Isoflavone reductase subfamily. In terms of assembly, dimer.

It carries out the reaction (-)-lariciresinol + NADP(+) = (-)-pinoresinol + NADPH + H(+). The catalysed reaction is (+)-secoisolariciresinol + NADP(+) = (-)-lariciresinol + NADPH + H(+). Functionally, reductase involved in lignan biosynthesis. Catalyzes the enantioselective sequential conversion of (-)-pinoresinol into (-)-lariciresinol and of (-)-lariciresinol into (+)-secoisolariciresinol. Abstracts the 4R-hydride from the NADPH cofactor during catalysis. This chain is Bifunctional pinoresinol-lariciresinol reductase 3, found in Thuja plicata (Western red-cedar).